Here is a 1133-residue protein sequence, read N- to C-terminus: Early transcription factor large subunit homolog (1133 aa).

A Helicase ATP-binding domain is found at 52–352 (KGGRAFFPCD…PNGQPLQRQQ (301 aa)). ATP is bound at residue 99–106 (WQTGTGKS). A DEAH box motif is present at residues 281 to 284 (DEIH). The region spanning 524–724 (MMKDILSIIR…EGDKALRKHA (201 aa)) is the Helicase C-terminal domain.

This sequence belongs to the DEAD box helicase family. DEAH subfamily.

Its subcellular location is the virion. It carries out the reaction ATP + H2O = ADP + phosphate + H(+). In terms of biological role, putative initation factor. This chain is Early transcription factor large subunit homolog, found in Ornithodoros (relapsing fever ticks).